A 726-amino-acid chain; its full sequence is MYNSNSYIPDLVEIQRQGFFYLLEKGIIEEISKRNPITCFEKQIEIFFYPQYYRLTKPFYSIQQAIFYKKSYVSKFYIPVQLTDRKTKRIFLKWILLAHFPLMTNRGHFLLNGSARVIINQLVRSPGIYFRENMHEIFSNKWSEKPSTTFRRFYADIICLKGTWLRIECDKDFSMWAKMKKGPKIPLLWFLLGMGLSEKYILNSVYKPMNLLQSFTKEMEKMQKSKSSKELKYPYISSTKQAWEQIQKLFKLKKTLRKFSFLKKNEEKPKTFIFGQSSTKIEAKVVFSDFAAFNNSVKRENTVFASNDDTFLVQTSFETKKKKNTRKKENFQKNKTQKTTKLSLQNKEKRVASKLEAYELGRKWFANKFMNPRTYDLGKQGRWLINKKLGLTIPLEQTTLTALDVLTATDSLMKIEDGFFEIDDIDHLKNKRVRTAGEALQEIFSIGLIRLEKSIRLKLNGNGQQSFFQKTSFFNFDSLMSTRPINGAFREFFGTHPLSQFMDQINPLAEITHKRRLSSLGPGGVSRDTATLAIRGIHPSHYGRICPIETPEGKNTGLVNSITTYSKISFHGYLESPFYKVYKGQVQRNLGVFYLSPDKDDHFQTATPDLNLTPLGFLPKKPIPVRIGKRFVRMKTHKLALMGVSPLQMISVATSFIPFLEHDDANRALMGSNMQRQAVPLIRPERPLIGTGLEARVVSDSGHAILAKTSGYIVYSSGSKIYLYTI.

It belongs to the RNA polymerase beta chain family. As to quaternary structure, in plastids the minimal PEP RNA polymerase catalytic core is composed of four subunits: alpha, beta, beta', and beta''. When a (nuclear-encoded) sigma factor is associated with the core the holoenzyme is formed, which can initiate transcription.

It is found in the plastid. The protein resides in the chloroplast. It carries out the reaction RNA(n) + a ribonucleoside 5'-triphosphate = RNA(n+1) + diphosphate. Its function is as follows. DNA-dependent RNA polymerase catalyzes the transcription of DNA into RNA using the four ribonucleoside triphosphates as substrates. The sequence is that of DNA-directed RNA polymerase subunit beta N-terminal section (rpoB1) from Tetradesmus obliquus (Green alga).